The sequence spans 339 residues: Serpentine receptor class alpha-21 (339 aa).

Transmembrane regions (helical) follow at residues 30 to 50, 150 to 170, 199 to 219, 250 to 270, and 282 to 302; these read FNFLFITTVILLSYCFTWLAI, FIAVSLLVLQLLLTLVSFYIA, VRTVVMVCCLVVTGFIYYLSV, ILIVLKLFCNMLSSIGINLLL, and VLVALFLPGVTYANLCLPLVI.

It belongs to the nematode receptor-like protein sra family.

The protein localises to the membrane. This chain is Serpentine receptor class alpha-21 (sra-21), found in Caenorhabditis elegans.